The sequence spans 68 residues: Ribosome modulation factor (68 aa).

This sequence belongs to the ribosome modulation factor family.

The protein localises to the cytoplasm. In terms of biological role, during stationary phase, converts 70S ribosomes to an inactive dimeric form (100S ribosomes). This Saccharophagus degradans (strain 2-40 / ATCC 43961 / DSM 17024) protein is Ribosome modulation factor.